A 211-amino-acid chain; its full sequence is LexA repressor (211 aa).

A DNA-binding region (H-T-H motif) is located at residues 27–47 (QTEIARAFGFKGVRAVQHHLD). Residues serine 131 and lysine 168 each act as for autocatalytic cleavage activity in the active site.

It belongs to the peptidase S24 family. Homodimer.

It catalyses the reaction Hydrolysis of Ala-|-Gly bond in repressor LexA.. Its function is as follows. Represses a number of genes involved in the response to DNA damage (SOS response), including recA and lexA. In the presence of single-stranded DNA, RecA interacts with LexA causing an autocatalytic cleavage which disrupts the DNA-binding part of LexA, leading to derepression of the SOS regulon and eventually DNA repair. This Xylella fastidiosa (strain 9a5c) protein is LexA repressor.